Consider the following 288-residue polypeptide: ATP synthase gamma chain (288 aa).

Belongs to the ATPase gamma chain family. In terms of assembly, F-type ATPases have 2 components, CF(1) - the catalytic core - and CF(0) - the membrane proton channel. CF(1) has five subunits: alpha(3), beta(3), gamma(1), delta(1), epsilon(1). CF(0) has three main subunits: a, b and c.

The protein localises to the cell membrane. Its function is as follows. Produces ATP from ADP in the presence of a proton gradient across the membrane. The gamma chain is believed to be important in regulating ATPase activity and the flow of protons through the CF(0) complex. This is ATP synthase gamma chain from Staphylococcus saprophyticus subsp. saprophyticus (strain ATCC 15305 / DSM 20229 / NCIMB 8711 / NCTC 7292 / S-41).